Here is a 497-residue protein sequence, read N- to C-terminus: Cytochrome P450 71A12 (497 aa).

Residues 4 to 24 (ILMVSLCLTTLITLFLLKQFL) form a helical membrane-spanning segment. Cys-439 contacts heme.

This sequence belongs to the cytochrome P450 family. It depends on heme as a cofactor.

The protein resides in the membrane. In terms of biological role, converts indole-3-acetaldoxime to indole cyanohydrin. Involved in the biosynthetic pathway to 4-hydroxyindole-3-carbonyl nitrile (4-OH-ICN), a cyanogenic metabolite required for inducible pathogen defense. This chain is Cytochrome P450 71A12 (CYP71A12), found in Arabidopsis thaliana (Mouse-ear cress).